Here is a 249-residue protein sequence, read N- to C-terminus: MKKTVIASTLAVGLGVTGIAAGNSADASEQGVDKAQLAQQAQSNPESLNAAPIQDGAYNINFNYNNTDYSFQSDGENFSWSYGEGSGEGSNASSEQATDNSSQQTAEQPQQVEQPQQTEQASTEQPAQEAAPQTEATQQPQQEATTQSASSSNESSSNESSSSEASESSSSGVNAHLQQIAQRESGGDIHATNPSSGASGKFQFLQSTWDSVAPAEYQGQPAASAPESVQDAAAQKLYDTEGASQWVTA.

The first 27 residues, 1 to 27 (MKKTVIASTLAVGLGVTGIAAGNSADA), serve as a signal peptide directing secretion. Composition is skewed to low complexity over residues 80-95 (WSYGEGSGEGSNASSE) and 103-171 (QQTA…SSSS). The interval 80–203 (WSYGEGSGEG…PSSGASGKFQ (124 aa)) is disordered. 2 stretches are compositionally biased toward polar residues: residues 172–182 (GVNAHLQQIAQ) and 192–203 (TNPSSGASGKFQ).

This sequence belongs to the transglycosylase family. SceD subfamily.

It is found in the secreted. Functionally, is able to cleave peptidoglycan and affects clumping and separation of bacterial cells. The polypeptide is Probable transglycosylase SceD 2 (sceD2) (Staphylococcus saprophyticus subsp. saprophyticus (strain ATCC 15305 / DSM 20229 / NCIMB 8711 / NCTC 7292 / S-41)).